The sequence spans 236 residues: MHITQLNRECLLCLFSFLDKDSRRSLSRTCSQLRDVFEDPTLWPLLHFHSLAELKKDNFRLSPALRSLSICWHSSRVQVCSIEDWLKSALQRSICSQHESLVNDFLLQVCNRCPNLTSVTLSGCGHVTDDCLARLLLSCPRLRTLRLENCARVTNRTLAAVAAHGRALQTLHVDFCRNVSAAGLLRLRAACPNLRLSAERSAAMIPDQPPRARVCAASAFSAAPGRQSMPHPTGSY.

The region spanning 1 to 46 (MHITQLNRECLLCLFSFLDKDSRRSLSRTCSQLRDVFEDPTLWPLL) is the F-box domain. LRR repeat units lie at residues 15–40 (FSFLDKDSRRSLSRTCSQLRDVFEDP), 43–72 (WPLLHFHSLAELKKDNFRLSPALRSLSICW), 98–123 (HESLVNDFLLQVCNRCPNLTSVTLSG), 124–149 (CGHVTDDCLARLLLSCPRLRTLRLEN), 150–175 (CARVTNRTLAAVAAHGRALQTLHVDF), and 176–201 (CRNVSAAGLLRLRAACPNLRLSAERS).

In terms of assembly, directly interacts with SKP1 and CUL1. In terms of tissue distribution, enriched in cardiac muscle (at protein level).

It is found in the cytoplasm. The protein localises to the myofibril. The protein resides in the sarcomere. Its subcellular location is the z line. It participates in protein modification; protein ubiquitination. Its function is as follows. Substrate-recognition component of the SCF (SKP1-CUL1-F-box protein)-type E3 ubiquitin ligase complex. Promotes ubiquitination of sarcomeric proteins alpha-actinin-2 (ACTN2) and filamin-C (FLNC). This Mus musculus (Mouse) protein is F-box and leucine-rich protein 22 (Fbxl22).